The sequence spans 68 residues: Large ribosomal subunit protein bL31 (68 aa).

Residues C16, C18, C36, and C39 each contribute to the Zn(2+) site.

This sequence belongs to the bacterial ribosomal protein bL31 family. Type A subfamily. In terms of assembly, part of the 50S ribosomal subunit. Zn(2+) is required as a cofactor.

Binds the 23S rRNA. In Sorangium cellulosum (strain So ce56) (Polyangium cellulosum (strain So ce56)), this protein is Large ribosomal subunit protein bL31.